The chain runs to 333 residues: B3 domain-containing protein At1g32030 (333 aa).

2 stretches are compositionally biased toward polar residues: residues 76–99 (VTVRNPEQNQQNLHRVSTSSSLLD) and 134–143 (PQNASSSSTL). A disordered region spans residues 76-179 (VTVRNPEQNQ…SEPKKAKTPY (104 aa)). The segment at residues 220-328 (QSRLLMPFNT…ILSFALVLPP (109 aa)) is a DNA-binding region (TF-B3).

The protein localises to the nucleus. The protein is B3 domain-containing protein At1g32030 of Arabidopsis thaliana (Mouse-ear cress).